We begin with the raw amino-acid sequence, 147 residues long: Large ribosomal subunit protein bL9 (147 aa).

The protein belongs to the bacterial ribosomal protein bL9 family.

Functionally, binds to the 23S rRNA. The chain is Large ribosomal subunit protein bL9 from Clostridium botulinum (strain 657 / Type Ba4).